A 464-amino-acid polypeptide reads, in one-letter code: MTLERLWQVLDPLWADPRVLSALFCGSAMAVVLLKRLGHRRIQQKMEEARRARDLALERMEKAARRFKQENPGTQTAHILSLTMVELAEKLKEGSLSPESVLYSYMGKALEVNREVNCVIDFIHGCEDQLQKVKQQKEKGLLYGIPVSIKDHIDCKGHVSSAGLVKFLGQVKEEDSVIVQVLKSQGAIPFVKTNIPQTMINYDCSNLIFGQTLNPLNHQKTPGGSSGGEGALIAGGGSLLGIGSDVAGSIRLPSSFCGLCGLKPTGFRISKLGVISPITGMNSVIGMLGPIARDVDSLALCMKALLCEEMFRLDPTVPPIPFDEEVYTSSKPLRIGYYEEDGYFQPSPSMKRAVQQTRKLLQEAGHTIVPFAPPKIDYVVDELFTRGIFSDGAAHLVDSFKGDIVDPNLKSQFNTYKLPALVKRILAIILKPIYPRIARDLSALCGVGSAKNLWDQHTAVGLPH.

Catalysis depends on charge relay system residues K150 and S225. The Acyl-ester intermediate role is filled by S249.

Belongs to the amidase family. As to expression, kidney.

It localises to the mitochondrion inner membrane. Its function is as follows. May have a vitamin D3 hydroxylase regulatory function. In Gallus gallus (Chicken), this protein is Vitamin D3 hydroxylase-associated protein.